Reading from the N-terminus, the 67-residue chain is Conotoxin TsMMSK-B022 (67 aa).

The first 22 residues, 1–22 (MMSKLGVLLTICLLLFPLTAVS), serve as a signal peptide directing secretion. The propeptide occupies 23-50 (LDGDQPADLPELRAQDFAPERSPWFDPV). 3 disulfide bridges follow: Cys53/Cys65, Cys54/Cys61, and Cys58/Cys64. Position 63 is a 4-hydroxyproline (Pro63).

This sequence belongs to the conotoxin M superfamily. As to expression, expressed by the venom duct.

The protein localises to the secreted. The sequence is that of Conotoxin TsMMSK-B022 from Conus tessulatus (Tessellate cone).